Reading from the N-terminus, the 85-residue chain is Small ribosomal subunit protein bS20 (85 aa).

Belongs to the bacterial ribosomal protein bS20 family.

In terms of biological role, binds directly to 16S ribosomal RNA. The polypeptide is Small ribosomal subunit protein bS20 (Lactobacillus johnsonii (strain CNCM I-12250 / La1 / NCC 533)).